The following is a 593-amino-acid chain: Polyphenol oxidase, chloroplastic (593 aa).

The segment covering 1 to 13 (MTSLSPPVVTTPT) has biased composition (low complexity). Positions 1 to 34 (MTSLSPPVVTTPTVPNPATKPLSPFSQNNSQVSL) are disordered. The N-terminal 89 residues, 1-89 (MTSLSPPVVT…GMGTDPFAFA (89 aa)), are a transit peptide targeting the chloroplast. Residues 24-34 (PFSQNNSQVSL) show a composition bias toward polar residues. 2 disulfides stabilise this stretch: Cys-100-Cys-115 and Cys-114-Cys-176. Residues His-175, His-196, His-205, His-327, His-331, and His-361 each contribute to the Cu cation site. The segment at residues 179–196 (CDGAYDQVGFPELELQIH) is a cross-link (2'-(S-cysteinyl)-histidine (Cys-His)).

It belongs to the tyrosinase family. Requires Cu(2+) as cofactor.

The protein resides in the plastid. Its subcellular location is the chloroplast thylakoid lumen. The catalysed reaction is 2 catechol + O2 = 2 1,2-benzoquinone + 2 H2O. In terms of biological role, catalyzes the oxidation of mono- and o-diphenols to o-diquinones. The polypeptide is Polyphenol oxidase, chloroplastic (Malus domestica (Apple)).